The chain runs to 268 residues: AN1-type zinc finger protein 1 (268 aa).

Ala2 is subject to N-acetylalanine. 2 consecutive AN1-type zinc fingers follow at residues 4 to 52 (LDIG…VINE) and 58 to 106 (QHTS…IPKP). 16 residues coordinate Zn(2+): Cys10, Cys15, Cys25, Cys28, Cys33, His36, His42, Cys44, Cys64, Cys69, Cys79, Cys82, Cys87, His90, His96, and Cys98. The segment at 160–260 (QTERIYFQVF…EYLNDEEQFC (101 aa)) is ubiquitin-like.

In terms of assembly, associates with the 26S proteasome; this association occurs upon exposure to arsenite and is reduced in the presence of ATP. Interacts (via AN1-type 1 and 2 zinc fingers) with PSMD1; this interaction is increased upon arsenite treatment and occurs in an ATP-independent manner. Interacts with PSMC4. Interacts with PSMA1. Interacts (via its ubiquitin-like region) with VCP; this interaction occurs in an arsenite-dependent manner and is necessary for the recruitment of the ubiquitin-selective ATPase VCP to stress granules (SGs).

Its subcellular location is the cytoplasm. The protein localises to the stress granule. Plays a role in the regulation of cytoplasmic stress granules (SGs) turnover. SGs are dynamic and transient cytoplasmic ribonucleoprotein assemblies important for cellular protein homeostasis when protein production is suspended after acute exogenous stress. Associates with SGs and is involved in the efficient and specific arsenite-induced clearance process of SGs through the recruitment of the ubiquitin-selective ATPase VCP and the 26S proteasome. This process requires both complexes for efficient degradation of damaged ubiquitinated SG proteins during recovery from arsenite stress, and hence avoiding aberrant cytoplasmic SGs degradation via autophagy. This Homo sapiens (Human) protein is AN1-type zinc finger protein 1.